The sequence spans 583 residues: Pectinesterase/pectinesterase inhibitor U1 (583 aa).

The signal sequence occupies residues 1–40 (MTRVEDFFSKQIDFCKRKKKIYLAIVASVLLVAAVIGVVA). The pectinesterase inhibitor U1 stretch occupies residues 60 to 221 (SSAHAIVKSA…EKMCSNALAM (162 aa)). Residues N85, N105, and N224 are each glycosylated (N-linked (GlcNAc...) asparagine). The interval 272 to 570 (DVVVAADGSG…TPGRFIAGGS (299 aa)) is pectinesterase U1. Substrate is bound by residues T347 and Q377. D400 functions as the Proton donor; for pectinesterase activity in the catalytic mechanism. C414 and C434 are oxidised to a cystine. Residue D421 is the Nucleophile; for pectinesterase activity of the active site. Residues R489 and W491 each coordinate substrate.

In the N-terminal section; belongs to the PMEI family. The protein in the C-terminal section; belongs to the pectinesterase family.

The protein resides in the secreted. The protein localises to the cell wall. The catalysed reaction is [(1-&gt;4)-alpha-D-galacturonosyl methyl ester](n) + n H2O = [(1-&gt;4)-alpha-D-galacturonosyl](n) + n methanol + n H(+). It functions in the pathway glycan metabolism; pectin degradation; 2-dehydro-3-deoxy-D-gluconate from pectin: step 1/5. Its function is as follows. Acts in the modification of cell walls via demethylesterification of cell wall pectin. The chain is Pectinesterase/pectinesterase inhibitor U1 (PMEU1) from Solanum lycopersicum (Tomato).